Reading from the N-terminus, the 176-residue chain is Large ribosomal subunit protein eL20A (176 aa).

Belongs to the eukaryotic ribosomal protein eL20 family. As to quaternary structure, component of the large ribosomal subunit (LSU). Mature yeast ribosomes consist of a small (40S) and a large (60S) subunit. The 40S small subunit contains 1 molecule of ribosomal RNA (18S rRNA) and at least 33 different proteins. The large 60S subunit contains 3 rRNA molecules (25S, 5.8S and 5S rRNA) and at least 46 different proteins. eL20 forms multiple interactions with RNA and proteins in the central protuberance, connecting components of core functional centers that are located far apart.

The protein resides in the cytoplasm. Component of the ribosome, a large ribonucleoprotein complex responsible for the synthesis of proteins in the cell. The small ribosomal subunit (SSU) binds messenger RNAs (mRNAs) and translates the encoded message by selecting cognate aminoacyl-transfer RNA (tRNA) molecules. The large subunit (LSU) contains the ribosomal catalytic site termed the peptidyl transferase center (PTC), which catalyzes the formation of peptide bonds, thereby polymerizing the amino acids delivered by tRNAs into a polypeptide chain. The nascent polypeptides leave the ribosome through a tunnel in the LSU and interact with protein factors that function in enzymatic processing, targeting, and the membrane insertion of nascent chains at the exit of the ribosomal tunnel. The polypeptide is Large ribosomal subunit protein eL20A (rpl2001) (Schizosaccharomyces pombe (strain 972 / ATCC 24843) (Fission yeast)).